A 78-amino-acid chain; its full sequence is Probable two-component-system connector protein YcgZ (78 aa).

In terms of biological role, probably a connector protein for RcsB/C regulation of biofilm formation, providing additional signal input into the two-component signaling pathway. Partially antagonizes the activities of YmgA and AriR, proteins that, via the Rcs phosphorelay, promote the synthesis of colanic acid, an exopolysaccharide and matrix component. This is Probable two-component-system connector protein YcgZ (ycgZ) from Escherichia coli (strain K12).